We begin with the raw amino-acid sequence, 609 residues long: Replication protein A 70 kDa DNA-binding subunit (609 aa).

The tract at residues 112–164 is disordered; sequence IGNPHPYNDGQGPPQPAAPAPASAPPPSKPQNISAPPPPSMNRGASKLFGGGS. The span at 124 to 151 shows a compositional bias: pro residues; it reads PPQPAAPAPASAPPPSKPQNISAPPPPS. The OB DNA-binding region spans 189–273; it reads WTVRARVTNK…VKNDYEMTFN (85 aa). The segment at 472–494 adopts a C4-type zinc-finger fold; it reads CPSQDCNKKVIDQQNGLFRCEKC.

The protein belongs to the replication factor A protein 1 family. In terms of assembly, component of the heterotrimeric canonical replication protein A complex (RPA). Interacts with rpain-a.

Its subcellular location is the nucleus. It is found in the PML body. Functionally, as part of the heterotrimeric replication protein A complex (RPA/RP-A), binds and stabilizes single-stranded DNA intermediates, that form during DNA replication or upon DNA stress. It prevents their reannealing and in parallel, recruits and activates different proteins and complexes involved in DNA metabolism. Thereby, it plays an essential role both in DNA replication and the cellular response to DNA damage. This chain is Replication protein A 70 kDa DNA-binding subunit (rpa1), found in Xenopus tropicalis (Western clawed frog).